The sequence spans 584 residues: Alkaline nuclease (584 aa).

Residues 409 to 430 are disordered; that stretch reads GGGADHHLRGSPGDSPPPIPFE.

It belongs to the herpesviridae alkaline nuclease family. In terms of assembly, interacts with major DNA-binding protein; this interaction increases the nuclease processivity of the alkaline exonuclease.

Its subcellular location is the host nucleus. The protein resides in the host cytoplasm. In terms of biological role, plays a role in processing non linear or branched viral DNA intermediates in order to promote the production of mature packaged unit-length linear progeny viral DNA molecules. Exhibits endonuclease and exonuclease activities and accepts both double-stranded and single-stranded DNA as substrate. Exonuclease digestion of DNA is in the 5'-&gt; 3' direction and the products are 5'-monophosphate nucleosides. Additionally, forms a recombinase with the major DNA-binding protein, which displays strand exchange activity. The polypeptide is Alkaline nuclease (UL98) (Human cytomegalovirus (strain AD169) (HHV-5)).